The sequence spans 232 residues: Large ribosomal subunit protein uL1 (232 aa).

Belongs to the universal ribosomal protein uL1 family. Part of the 50S ribosomal subunit.

Its function is as follows. Binds directly to 23S rRNA. The L1 stalk is quite mobile in the ribosome, and is involved in E site tRNA release. Protein L1 is also a translational repressor protein, it controls the translation of the L11 operon by binding to its mRNA. The polypeptide is Large ribosomal subunit protein uL1 (Xylella fastidiosa (strain M23)).